The chain runs to 725 residues: Methionine--tRNA ligase (725 aa).

The 'HIGH' region motif lies at 27–37 (PYANGQIHIGH). Zn(2+)-binding residues include C158, C161, C171, and C174. The 'KMSKS' region motif lies at 348 to 352 (KMSKS). K351 provides a ligand contact to ATP. Residues 619-725 (DFAKIDLRIA…SGAKPGMRVK (107 aa)) form the tRNA-binding domain.

It belongs to the class-I aminoacyl-tRNA synthetase family. MetG type 1 subfamily. As to quaternary structure, homodimer. Requires Zn(2+) as cofactor.

Its subcellular location is the cytoplasm. It carries out the reaction tRNA(Met) + L-methionine + ATP = L-methionyl-tRNA(Met) + AMP + diphosphate. Its function is as follows. Is required not only for elongation of protein synthesis but also for the initiation of all mRNA translation through initiator tRNA(fMet) aminoacylation. The polypeptide is Methionine--tRNA ligase (Burkholderia pseudomallei (strain 1710b)).